Reading from the N-terminus, the 65-residue chain is Small ribosomal subunit protein bS21 (65 aa).

The segment covering 33-42 has biased composition (basic and acidic residues); that stretch reads RRREHYEKPS. Positions 33-65 are disordered; sequence RRREHYEKPSVKRKRKEAARLRKLQKMAREANN. The segment covering 43–58 has biased composition (basic residues); sequence VKRKRKEAARLRKLQK.

The protein belongs to the bacterial ribosomal protein bS21 family.

This chain is Small ribosomal subunit protein bS21, found in Herpetosiphon aurantiacus (strain ATCC 23779 / DSM 785 / 114-95).